A 149-amino-acid chain; its full sequence is Transcriptional regulator MraZ (149 aa).

SpoVT-AbrB domains follow at residues 5–52 and 81–124; these read ITTL…PLPE and AEEC…DSMV.

It belongs to the MraZ family. Forms oligomers.

It is found in the cytoplasm. Its subcellular location is the nucleoid. This chain is Transcriptional regulator MraZ, found in Nitrosococcus oceani (strain ATCC 19707 / BCRC 17464 / JCM 30415 / NCIMB 11848 / C-107).